Here is a 588-residue protein sequence, read N- to C-terminus: L-fucose isomerase (588 aa).

Residues Glu-335 and Asp-359 each act as proton acceptor in the active site. Positions 335, 359, and 525 each coordinate Mn(2+).

The protein belongs to the L-fucose isomerase family. Mn(2+) serves as cofactor.

It is found in the cytoplasm. It catalyses the reaction L-fucose = L-fuculose. It participates in carbohydrate degradation; L-fucose degradation; L-lactaldehyde and glycerone phosphate from L-fucose: step 1/3. In terms of biological role, converts the aldose L-fucose into the corresponding ketose L-fuculose. This is L-fucose isomerase from Streptococcus pneumoniae serotype 2 (strain D39 / NCTC 7466).